The sequence spans 356 residues: Protein-glutamate methylesterase/protein-glutamine glutaminase 3 (356 aa).

The 118-residue stretch at 3 to 120 folds into the Response regulatory domain; that stretch reads KVAIVDDSAV…KGFLEESQAR (118 aa). The residue at position 54 (Asp54) is a 4-aspartylphosphate. One can recognise a CheB-type methylesterase domain in the interval 165 to 356; sequence NQTTDRVVAL…AEEIIAFTKQ (192 aa). Catalysis depends on residues Ser177, His203, and Asp299.

Belongs to the CheB family. Post-translationally, phosphorylated by CheA. Phosphorylation of the N-terminal regulatory domain activates the methylesterase activity.

Its subcellular location is the cytoplasm. The catalysed reaction is [protein]-L-glutamate 5-O-methyl ester + H2O = L-glutamyl-[protein] + methanol + H(+). It catalyses the reaction L-glutaminyl-[protein] + H2O = L-glutamyl-[protein] + NH4(+). Functionally, involved in chemotaxis. Part of a chemotaxis signal transduction system that modulates chemotaxis in response to various stimuli. Catalyzes the demethylation of specific methylglutamate residues introduced into the chemoreceptors (methyl-accepting chemotaxis proteins or MCP) by CheR. Also mediates the irreversible deamidation of specific glutamine residues to glutamic acid. The protein is Protein-glutamate methylesterase/protein-glutamine glutaminase 3 of Shewanella oneidensis (strain ATCC 700550 / JCM 31522 / CIP 106686 / LMG 19005 / NCIMB 14063 / MR-1).